The primary structure comprises 69 residues: DNA-directed RNA polymerase subunit epsilon (69 aa).

The protein belongs to the RNA polymerase subunit epsilon family. As to quaternary structure, RNAP is composed of a core of 2 alpha, a beta and a beta' subunit. The core is associated with a delta subunit, and at least one of epsilon or omega. When a sigma factor is associated with the core the holoenzyme is formed, which can initiate transcription.

The catalysed reaction is RNA(n) + a ribonucleoside 5'-triphosphate = RNA(n+1) + diphosphate. Functionally, a non-essential component of RNA polymerase (RNAP). This is DNA-directed RNA polymerase subunit epsilon from Halalkalibacterium halodurans (strain ATCC BAA-125 / DSM 18197 / FERM 7344 / JCM 9153 / C-125) (Bacillus halodurans).